The sequence spans 970 residues: Vacuolar membrane protease (970 aa).

A compositionally biased stretch (polar residues) spans 1–12; that stretch reads MTTADSNSSATR. Residues 1–35 form a disordered region; the sequence is MTTADSNSSATRGSHEMADGSNRVPNDEPYHRKSP. At 1-56 the chain is on the cytoplasmic side; it reads MTTADSNSSATRGSHEMADGSNRVPNDEPYHRKSPESCENANFFVRAMRASFGYRK. Residues 25-35 are compositionally biased toward basic and acidic residues; the sequence is PNDEPYHRKSP. The helical transmembrane segment at 57–77 threads the bilayer; it reads TSLTILVFLSVIATVLLSYYD. At 78-397 the chain is on the vacuolar side; that stretch reads SSLEFSVSLP…FVVPMTFVFG (320 aa). Residues N146 and N173 are each glycosylated (N-linked (GlcNAc...) asparagine). 2 residues coordinate Zn(2+): H187 and D199. E234 functions as the Proton acceptor in the catalytic mechanism. Residues E235, E260, and H333 each coordinate Zn(2+). A helical transmembrane segment spans residues 398-418; it reads VNVLLMVLVPLVSLISLALIF. The Cytoplasmic portion of the chain corresponds to 419–423; the sequence is AHRKW. Residues 424-444 form a helical membrane-spanning segment; that stretch reads SVSLVTFFKFPLSFILSIFLL. The Vacuolar segment spans residues 445–465; it reads DNFSSWFVVSVNNFLPNSSAG. N446 and N461 each carry an N-linked (GlcNAc...) asparagine glycan. Residues 466–486 traverse the membrane as a helical segment; sequence IIALTYFSFFVLANYLLLNGI. Topologically, residues 487–502 are cytoplasmic; that stretch reads NLLFWKFKGTRHDEKL. The helical transmembrane segment at 503–523 threads the bilayer; sequence VVILQISFMFWVSLIWSTANI. The Vacuolar segment spans residues 524–535; the sequence is AKSQFNGEHSGE. The helical transmembrane segment at 536–556 threads the bilayer; it reads FLLTLLYILQAAGGVFGLLCW. Topologically, residues 557–620 are cytoplasmic; it reads LFKRSRTVHT…PTKHYSYDWS (64 aa). A helical transmembrane segment spans residues 621 to 641; the sequence is IQFLFIVPISSFLSYNYGWLI. The Vacuolar segment spans residues 642–658; that stretch reads LEGLKKTLQESATSEYL. The chain crosses the membrane as a helical span at residues 659 to 679; it reads VFRALKLLAVVVAVPYLPFIF. The Cytoplasmic portion of the chain corresponds to 680–683; that stretch reads KVNR. A helical transmembrane segment spans residues 684–704; it reads IVFLVTIFLFVYGLGAIVISE. Over 705 to 970 the chain is Vacuolar; sequence PFTEANPLKL…LVNVKKSVLV (266 aa). N-linked (GlcNAc...) asparagine glycosylation is found at N738, N797, and N877.

The protein belongs to the peptidase M28 family. Zn(2+) serves as cofactor.

The protein localises to the vacuole membrane. In terms of biological role, may be involved in vacuolar sorting and osmoregulation. The polypeptide is Vacuolar membrane protease (Meyerozyma guilliermondii (strain ATCC 6260 / CBS 566 / DSM 6381 / JCM 1539 / NBRC 10279 / NRRL Y-324) (Yeast)).